The sequence spans 226 residues: ATP synthase subunit a (226 aa).

6 helical membrane passes run 18 to 38, 79 to 99, 105 to 125, 134 to 154, 179 to 199, and 201 to 221; these read FITG…SLGA, LAGT…IPGF, SWSF…FEGI, FAHF…IEII, LIML…VLFF, and GILQ…GAVL.

The protein belongs to the ATPase A chain family. F-type ATPases have 2 components, CF(1) - the catalytic core - and CF(0) - the membrane proton channel. CF(1) has five subunits: alpha(3), beta(3), gamma(1), delta(1), epsilon(1). CF(0) has three main subunits: a(1), b(2) and c(9-12). The alpha and beta chains form an alternating ring which encloses part of the gamma chain. CF(1) is attached to CF(0) by a central stalk formed by the gamma and epsilon chains, while a peripheral stalk is formed by the delta and b chains.

The protein resides in the cell inner membrane. Its function is as follows. Key component of the proton channel; it plays a direct role in the translocation of protons across the membrane. This chain is ATP synthase subunit a, found in Helicobacter pylori (strain J99 / ATCC 700824) (Campylobacter pylori J99).